Consider the following 77-residue polypeptide: Secapin (77 aa).

Positions 1 to 32 (MKNYSKNATYLITVLLFSFVAMLLIIPSKCEA) are cleaved as a signal peptide. The propeptide occupies 33–52 (VSNDMQPLEARSADLVPEPR). C61 and C72 are joined by a disulfide.

It belongs to the secapin family. In terms of tissue distribution, expressed by the venom gland.

Its subcellular location is the secreted. Its function is as follows. Nontoxic peptide. The protein is Secapin of Vespa magnifica (Hornet).